The sequence spans 86 residues: Large ribosomal subunit protein uL23 (86 aa).

It belongs to the universal ribosomal protein uL23 family. Part of the 50S ribosomal subunit. Contacts protein L29.

In terms of biological role, binds to 23S rRNA. One of the proteins that surrounds the polypeptide exit tunnel on the outside of the ribosome. This chain is Large ribosomal subunit protein uL23, found in Pyrococcus horikoshii (strain ATCC 700860 / DSM 12428 / JCM 9974 / NBRC 100139 / OT-3).